Here is a 256-residue protein sequence, read N- to C-terminus: Nuclear shuttle protein (256 aa).

The Bipartite nuclear localization signal motif lies at 21–42; it reads YQGFRRTAIVTRHDGKRRQHQS. The Nuclear localization signal motif lies at 81-96; that stretch reads QLGKIEPNRCRSYIKL. Residues 150-187 are interaction with Arabidopsis thaliana NSI protein; the sequence is ELFGARINSHGNLAVMPSLKDRFYIRHLLKRVLSVDKD.

This sequence belongs to the begomovirus nuclear shuttle protein family. Binds to single-stranded and double-stranded viral DNA. Interacts with the host nuclear shuttle interacting (NSI) protein. This interaction may allow NSP to recruit NSI monomers to the viral genome and thus regulate nuclear export of viral genome by NSP.

The protein resides in the host nucleus. It localises to the host cytoplasm. The protein localises to the host cell membrane. Its function is as follows. Binds to the genomic viral ssDNA, shuttles it into and out of the cell nucleus. Begomoviruses use 2 proteins to transport their DNA from cell to cell. The nuclear shuttle protein (NSP) shuttles it between nucleus and cytoplasm and the movement protein (MP) probably transports the DNA-NSP complex to the cell periphery and facilitates movement across the cell wall. This Macroptilium lathyroides (Lima bean) protein is Nuclear shuttle protein.